The primary structure comprises 211 residues: Guanylate kinase (211 aa).

Positions 5–185 (GLLLILSSPS…AEEQLKMILS (181 aa)) constitute a Guanylate kinase-like domain. 12 to 19 (SPSGAGKS) serves as a coordination point for ATP.

Belongs to the guanylate kinase family.

The protein localises to the cytoplasm. The catalysed reaction is GMP + ATP = GDP + ADP. In terms of biological role, essential for recycling GMP and indirectly, cGMP. The sequence is that of Guanylate kinase from Cereibacter sphaeroides (strain ATCC 17023 / DSM 158 / JCM 6121 / CCUG 31486 / LMG 2827 / NBRC 12203 / NCIMB 8253 / ATH 2.4.1.) (Rhodobacter sphaeroides).